Here is a 186-residue protein sequence, read N- to C-terminus: Membrane protein Rv1476 (186 aa).

The helical transmembrane segment at Phe-138–Ala-158 threads the bilayer. The segment at Arg-166–Val-186 is disordered.

It is found in the membrane. In terms of biological role, may affect the expression of genes linked to host macrophage apoptosis and immune response, thereby promoting the survival of M.tuberculosis in host macrophages. Overexpression of the gene increases susceptibility of the bacteria to various stresses, but promotes intracellular survival in host macrophages. It has no impact on the growth rate in vitro. Overexpression causes changes in the transcriptome of THP-1 cells, including expression of genes involved in cell proliferation, fatty acid degradation, cytokine-cytokine receptor interaction and immune response pathways. This chain is Membrane protein Rv1476, found in Mycobacterium tuberculosis (strain ATCC 25618 / H37Rv).